A 60-amino-acid chain; its full sequence is MSKLKITQIKSGIATKPNHRETLRSLGLKRIGDTVIKEDRPEFRGMVRTVRHLVTMEEVD.

It belongs to the universal ribosomal protein uL30 family. In terms of assembly, part of the 50S ribosomal subunit.

In Cutibacterium acnes (strain DSM 16379 / KPA171202) (Propionibacterium acnes), this protein is Large ribosomal subunit protein uL30.